We begin with the raw amino-acid sequence, 318 residues long: Taste receptor type 2 member 60 (318 aa).

The Extracellular portion of the chain corresponds to 1–7; it reads MNGDHMV. Residues 8–28 form a helical membrane-spanning segment; sequence LGSSVTDKKAIILVTILLLLR. Over 29-40 the chain is Cytoplasmic; sequence LVAIAGNGFIIA. The helical transmembrane segment at 41-61 threads the bilayer; the sequence is ALGVEWVLRRMLLPCDXLLVS. Over 62–88 the chain is Extracellular; that stretch reads LGASRFCLQSVVMGKTIYVFLHPMAFP. Residues 89 to 109 traverse the membrane as a helical segment; it reads YNPVLQFLAFQWDFLNAATLW. Over 110–128 the chain is Cytoplasmic; the sequence is FSTWLSVFYCVKIAAFTHP. The helical transmembrane segment at 129-149 threads the bilayer; sequence VFLWLKHKLSGWLPWILFSSV. Topologically, residues 150-183 are extracellular; that stretch reads GLSSFTTILFFIGNHRMYQNYLRNHLQPWNITGN. An N-linked (GlcNAc...) asparagine glycan is attached at asparagine 179. The chain crosses the membrane as a helical span at residues 184–204; that stretch reads SIRSYCEKFYLFPLKMITWTM. At 205 to 234 the chain is on the cytoplasmic side; the sequence is PTAVFFICMILLITSLGRHMKKALLTTSGF. A helical membrane pass occupies residues 235 to 255; sequence REPSMQAHIKALLALLSFAML. Residues 256-264 lie on the Extracellular side of the membrane; sequence FISYFLSLV. The helical transmembrane segment at 265 to 285 threads the bilayer; sequence FSAAGIFPPLDFKFWVWESVI. Over 286-318 the chain is Cytoplasmic; sequence YLCAAVHPIILLFSNCRLRAVLKSCRSSRCGTP.

Belongs to the G-protein coupled receptor T2R family.

The protein resides in the membrane. In terms of biological role, receptor that may play a role in the perception of bitterness and is gustducin-linked. May play a role in sensing the chemical composition of the gastrointestinal content. The activity of this receptor may stimulate alpha gustducin, mediate PLC-beta-2 activation and lead to the gating of TRPM5. The polypeptide is Taste receptor type 2 member 60 (TAS2R60) (Gorilla gorilla gorilla (Western lowland gorilla)).